Here is a 325-residue protein sequence, read N- to C-terminus: Beta-ketoacyl-[acyl-carrier-protein] synthase III (325 aa).

Catalysis depends on residues cysteine 119 and histidine 252. The ACP-binding stretch occupies residues 253 to 257 (QANIR). Asparagine 282 is a catalytic residue.

The protein belongs to the thiolase-like superfamily. FabH family. In terms of assembly, homodimer.

Its subcellular location is the cytoplasm. It carries out the reaction malonyl-[ACP] + acetyl-CoA + H(+) = 3-oxobutanoyl-[ACP] + CO2 + CoA. It functions in the pathway lipid metabolism; fatty acid biosynthesis. Its function is as follows. Catalyzes the condensation reaction of fatty acid synthesis by the addition to an acyl acceptor of two carbons from malonyl-ACP. Catalyzes the first condensation reaction which initiates fatty acid synthesis and may therefore play a role in governing the total rate of fatty acid production. Possesses both acetoacetyl-ACP synthase and acetyl transacylase activities. Its substrate specificity determines the biosynthesis of branched-chain and/or straight-chain of fatty acids. This chain is Beta-ketoacyl-[acyl-carrier-protein] synthase III, found in Variovorax paradoxus (strain S110).